Reading from the N-terminus, the 142-residue chain is Hemoglobin subunit alpha (142 aa).

The Globin domain maps to 2-142 (VLSPTDKSNV…VSTVLTSKYR (141 aa)). Ser4 carries the phosphoserine modification. N6-succinyllysine is present on residues Lys8 and Lys12. Residue Lys17 is modified to N6-acetyllysine; alternate. An N6-succinyllysine; alternate modification is found at Lys17. Residue Tyr25 is modified to Phosphotyrosine. The residue at position 41 (Lys41) is an N6-succinyllysine. Residue His59 participates in O2 binding. Position 88 (His88) interacts with heme b. Ser103 is subject to Phosphoserine. Thr109 is modified (phosphothreonine). A phosphoserine mark is found at Ser125 and Ser132. Phosphothreonine is present on residues Thr135 and Thr138. At Ser139 the chain carries Phosphoserine.

Belongs to the globin family. Heterotetramer of two alpha chains and two beta chains. As to expression, red blood cells.

Functionally, involved in oxygen transport from the lung to the various peripheral tissues. Hemopressin acts as an antagonist peptide of the cannabinoid receptor CNR1. Hemopressin-binding efficiently blocks cannabinoid receptor CNR1 and subsequent signaling. In Balaenoptera acutorostrata (Common minke whale), this protein is Hemoglobin subunit alpha (HBA).